Reading from the N-terminus, the 611-residue chain is Angiotensin-converting enzyme (611 aa).

The N-terminal stretch at 1–17 (MKLLVVTILAGLAVCHG) is a signal peptide. Positions 19-607 (TKEEIVATEY…VESLCHQRYK (589 aa)) constitute a Peptidase M2 domain. A glycan (N-linked (GlcNAc...) asparagine) is linked at Asn53. Cys133 and Cys141 are oxidised to a cystine. An N-linked (GlcNAc...) asparagine glycan is attached at Asn196. Cysteines 336 and 354 form a disulfide. His367 is a Zn(2+) binding site. Catalysis depends on Glu368, which acts as the Proton acceptor. The Zn(2+) site is built by His371 and Glu395. Residue His497 is the Proton donor of the active site. Cys522 and Cys540 are disulfide-bonded. A glycan (N-linked (GlcNAc...) asparagine) is linked at Asn531.

This sequence belongs to the peptidase M2 family. The cofactor is Zn(2+). In terms of tissue distribution, expressed in the compound ganglion and in the posterior region of the midgut.

Its subcellular location is the secreted. The protein localises to the extracellular space. It catalyses the reaction Release of a C-terminal dipeptide, oligopeptide-|-Xaa-Yaa, when Xaa is not Pro, and Yaa is neither Asp nor Glu. Thus, conversion of angiotensin I to angiotensin II, with increase in vasoconstrictor activity, but no action on angiotensin II.. Involved in the specific maturation or degradation of a number of bioactive peptides. The protein is Angiotensin-converting enzyme (ACE) of Haematobia irritans exigua (Buffalo fly).